The primary structure comprises 372 residues: Cobalt-precorrin-5B C(1)-methyltransferase (372 aa).

The protein belongs to the CbiD family.

It carries out the reaction Co-precorrin-5B + S-adenosyl-L-methionine = Co-precorrin-6A + S-adenosyl-L-homocysteine. Its pathway is cofactor biosynthesis; adenosylcobalamin biosynthesis; cob(II)yrinate a,c-diamide from sirohydrochlorin (anaerobic route): step 6/10. Catalyzes the methylation of C-1 in cobalt-precorrin-5B to form cobalt-precorrin-6A. The protein is Cobalt-precorrin-5B C(1)-methyltransferase of Geobacillus thermodenitrificans (strain NG80-2).